The chain runs to 367 residues: Chorismate synthase (367 aa).

Arginine 48 contacts NADP(+). FMN-binding positions include 125-127, 243-244, glycine 283, 298-302, and arginine 324; these read RSS, NA, and KPTSS.

This sequence belongs to the chorismate synthase family. In terms of assembly, homotetramer. FMNH2 is required as a cofactor.

It catalyses the reaction 5-O-(1-carboxyvinyl)-3-phosphoshikimate = chorismate + phosphate. It functions in the pathway metabolic intermediate biosynthesis; chorismate biosynthesis; chorismate from D-erythrose 4-phosphate and phosphoenolpyruvate: step 7/7. Functionally, catalyzes the anti-1,4-elimination of the C-3 phosphate and the C-6 proR hydrogen from 5-enolpyruvylshikimate-3-phosphate (EPSP) to yield chorismate, which is the branch point compound that serves as the starting substrate for the three terminal pathways of aromatic amino acid biosynthesis. This reaction introduces a second double bond into the aromatic ring system. The polypeptide is Chorismate synthase (Psychrobacter cryohalolentis (strain ATCC BAA-1226 / DSM 17306 / VKM B-2378 / K5)).